The chain runs to 196 residues: UMP-CMP kinase (196 aa).

Residue 13–18 coordinates ATP; sequence GAGKGT. S33 is subject to Phosphoserine. Residues 33–63 are NMP; sequence SAGELLRDERKNPDSQYGELIEKYIKDGKIV. R39 contacts a ribonucleoside 5'-phosphate. N6-acetyllysine occurs at positions 43 and 55. Residues 61–63 and 93–96 each bind a ribonucleoside 5'-phosphate; these read KIV and GFPR. CMP is bound at residue N100. K106 is subject to N6-succinyllysine. Residues 133-143 are LID; sequence ERGKSSGRSDD. R134 contacts ATP. Positions 140 and 151 each coordinate a ribonucleoside 5'-phosphate. K179 contacts ATP. S180 carries the phosphoserine modification.

It belongs to the adenylate kinase family. UMP-CMP kinase subfamily. As to quaternary structure, monomer. Mg(2+) serves as cofactor.

The protein resides in the nucleus. It is found in the cytoplasm. The catalysed reaction is CMP + ATP = CDP + ADP. The enzyme catalyses dCMP + ATP = dCDP + ADP. It carries out the reaction UMP + ATP = UDP + ADP. It catalyses the reaction a 2'-deoxyribonucleoside 5'-diphosphate + ATP = a 2'-deoxyribonucleoside 5'-triphosphate + ADP. The catalysed reaction is a ribonucleoside 5'-diphosphate + ATP = a ribonucleoside 5'-triphosphate + ADP. Its function is as follows. Catalyzes the phosphorylation of pyrimidine nucleoside monophosphates at the expense of ATP. Plays an important role in de novo pyrimidine nucleotide biosynthesis. Has preference for UMP and CMP as phosphate acceptors. Also displays broad nucleoside diphosphate kinase activity. The sequence is that of UMP-CMP kinase from Bos taurus (Bovine).